The chain runs to 69 residues: DNA gyrase inhibitor YacG (69 aa).

Residues cysteine 7, cysteine 10, cysteine 26, and cysteine 30 each contribute to the Zn(2+) site.

It belongs to the DNA gyrase inhibitor YacG family. Interacts with GyrB. Requires Zn(2+) as cofactor.

Functionally, inhibits all the catalytic activities of DNA gyrase by preventing its interaction with DNA. Acts by binding directly to the C-terminal domain of GyrB, which probably disrupts DNA binding by the gyrase. In Shewanella baltica (strain OS195), this protein is DNA gyrase inhibitor YacG.